We begin with the raw amino-acid sequence, 414 residues long: Serine hydroxymethyltransferase (414 aa).

(6S)-5,6,7,8-tetrahydrofolate contacts are provided by residues Leu-117 and 121 to 123 (GHL). Lys-226 is modified (N6-(pyridoxal phosphate)lysine). Residues Glu-241 and 349 to 351 (TPF) each bind (6S)-5,6,7,8-tetrahydrofolate.

This sequence belongs to the SHMT family. In terms of assembly, homodimer. Requires pyridoxal 5'-phosphate as cofactor.

It is found in the cytoplasm. The catalysed reaction is (6R)-5,10-methylene-5,6,7,8-tetrahydrofolate + glycine + H2O = (6S)-5,6,7,8-tetrahydrofolate + L-serine. The protein operates within one-carbon metabolism; tetrahydrofolate interconversion. It functions in the pathway amino-acid biosynthesis; glycine biosynthesis; glycine from L-serine: step 1/1. Catalyzes the reversible interconversion of serine and glycine with tetrahydrofolate (THF) serving as the one-carbon carrier. Also exhibits THF-independent aldolase activity toward beta-hydroxyamino acids, producing glycine and aldehydes, via a retro-aldol mechanism. This chain is Serine hydroxymethyltransferase, found in Methanothrix thermoacetophila (strain DSM 6194 / JCM 14653 / NBRC 101360 / PT) (Methanosaeta thermophila).